An 819-amino-acid polypeptide reads, in one-letter code: Protein O-mannosyl-transferase tmem260 (819 aa).

Polar residues predominate over residues 1-10 (MNNSPTLSNT). A disordered region spans residues 1-68 (MNNSPTLSNT…NNNNNIINVN (68 aa)). Low complexity predominate over residues 15–68 (NNNNNSNSNSNSNNNNNNNNNNNNNSNNNNNNNNNVNRNVNNRNNNNNNIINVN). 3 N-linked (GlcNAc...) asparagine glycosylation sites follow: asparagine 18, asparagine 38, and asparagine 70. The next 7 membrane-spanning stretches (helical) occupy residues 113 to 133 (IACI…TQYP), 152 to 172 (VAHP…SHII), 185 to 205 (FMSS…VYLW), 210 to 230 (WCGL…MYQI), 232 to 252 (GEVF…GVWY), 285 to 305 (LTNQ…LMFI), and 316 to 336 (ILSN…LLFI). Residue asparagine 349 is glycosylated (N-linked (GlcNAc...) asparagine). 4 helical membrane-spanning segments follow: residues 391–411 (LIIQ…LNLL), 427–447 (MIIF…NLPI), 459–479 (FFMQ…KSIF), and 505–525 (YLLP…NYNL). N-linked (GlcNAc...) asparagine glycans are attached at residues asparagine 531, asparagine 686, asparagine 693, and asparagine 783.

It belongs to the glycosyltransferase 117 (GT117) family.

It localises to the endoplasmic reticulum membrane. It carries out the reaction a di-trans,poly-cis-dolichyl beta-D-mannosyl phosphate + L-seryl-[protein] = 3-O-(alpha-D-mannosyl)-L-seryl-[protein] + a di-trans,poly-cis-dolichyl phosphate + H(+). It catalyses the reaction a di-trans,poly-cis-dolichyl beta-D-mannosyl phosphate + L-threonyl-[protein] = 3-O-(alpha-D-mannosyl)-L-threonyl-[protein] + a di-trans,poly-cis-dolichyl phosphate + H(+). Functionally, O-mannosyl-transferase that transfers mannosyl residues to the hydroxyl group of serine or threonine residues of proteins. This chain is Protein O-mannosyl-transferase tmem260, found in Dictyostelium discoideum (Social amoeba).